The following is a 586-amino-acid chain: Ezrin (586 aa).

The FERM domain maps to 2-295 (PKPINVRVTT…GNHELYMRRR (294 aa)). Residue Lys60 is modified to N6-acetyllysine. The short motif at 115-120 (IYCPPE) is the [IL]-x-C-x-x-[DE] motif element. Residue Tyr146 is modified to Phosphotyrosine; by PDGFR. The segment at 244 to 586 (EIRNISFNDK…KQRIDEFEAM (343 aa)) is interaction with SCYL3. Residues 302 to 462 (VQQMKAQARE…QDDLVKTKEE (161 aa)) adopt a coiled-coil conformation. Residues 305–340 (MKAQAREEKHQKQLERQQLESEKKRREAVEQEKEQM) are disordered. Basic and acidic residues predominate over residues 308 to 340 (QAREEKHQKQLERQQLESEKKRREAVEQEKEQM). Residue Tyr354 is modified to Phosphotyrosine; by PDGFR. Ser366 bears the Phosphoserine mark. Tyr478 carries the phosphotyrosine modification. Position 535 is a phosphoserine (Ser535). At Thr567 the chain carries Phosphothreonine; by ROCK2 and PKC/PRKCI.

As to quaternary structure, interacts with PALS1. Found in a complex with EZR, PODXL and NHERF2. Interacts with MCC, PLEKHG6, PODXL, SCYL3/PACE1, NHERF1, NHERF2 and TMEM8B. Interacts (when phosphorylated) with FES/FPS. Interacts with dimeric S100P, the interaction may be activating through unmasking of F-actin binding sites. Identified in complexes that contain VIM, EZR, AHNAK, BFSP1, BFSP2, ANK2, PLEC, PRX and spectrin. Detected in a complex composed of at least EZR, AHNAK, PPL and PRX. Interacts with PDPN (via cytoplasmic domain); activates RHOA and promotes epithelial-mesenchymal transition. Interacts with SPN/CD43 cytoplasmic tail, CD44 and ICAM2. Interacts with SLC9A3; interaction targets SLC9A3 to the apical membrane. Interacts with SLC9A1; regulates interactions of SLC9A1 with cytoskeletal and promotes stress fiber formation. Interacts with CLIC5; may work together in a complex which also includes RDX and MYO6 to stabilize linkages between the plasma membrane and subjacent actin cytoskeleton at the base of stereocilia. Post-translationally, phosphorylated by tyrosine-protein kinases. Phosphorylation by ROCK2 suppresses the head-to-tail association of the N-terminal and C-terminal halves resulting in an opened conformation which is capable of actin and membrane-binding. S-nitrosylation is induced by interferon-gamma and oxidatively-modified low-densitity lipoprotein (LDL(ox)) possibly implicating the iNOS-S100A8/9 transnitrosylase complex.

It localises to the apical cell membrane. It is found in the cell projection. Its subcellular location is the microvillus membrane. The protein resides in the ruffle membrane. The protein localises to the cytoplasm. It localises to the cell cortex. It is found in the cytoskeleton. Its subcellular location is the microvillus. Its activity is regulated as follows. A head-to-tail association, of the N-terminal and C-terminal halves results in a closed conformation (inactive form) which is incapable of actin or membrane-binding. Functionally, probably involved in connections of major cytoskeletal structures to the plasma membrane. In epithelial cells, required for the formation of microvilli and membrane ruffles on the apical pole. Along with PLEKHG6, required for normal macropinocytosis. The sequence is that of Ezrin (EZR) from Oryctolagus cuniculus (Rabbit).